The following is a 481-amino-acid chain: Cysteine--tRNA ligase (481 aa).

Cysteine 43 lines the Zn(2+) pocket. The short motif at 45-55 (ATVQGLPHIGH) is the 'HIGH' region element. Cysteine 221, histidine 246, and glutamate 250 together coordinate Zn(2+). The 'KMSKS' region motif lies at 277–281 (KMSKS). ATP is bound at residue lysine 280.

This sequence belongs to the class-I aminoacyl-tRNA synthetase family. Monomer. Zn(2+) serves as cofactor.

Its subcellular location is the cytoplasm. It catalyses the reaction tRNA(Cys) + L-cysteine + ATP = L-cysteinyl-tRNA(Cys) + AMP + diphosphate. The protein is Cysteine--tRNA ligase of Mycobacterium sp. (strain JLS).